The chain runs to 2883 residues: Desmoplakin (2883 aa).

The interval 1-21 is disordered; sequence MSCNGGSHPRINTLGRMTRAE. The tract at residues 1 to 596 is interaction with PKP1, JUP, PKP2; it reads MSCNGGSHPR…DYMKTIEDLE (596 aa). Residues 1-1068 are globular 1; it reads MSCNGGSHPR…ANSENCNKNK (1068 aa). Ser22 is subject to Phosphoserine. Position 59 is a phosphothreonine (Thr59). Position 65 is a phosphoserine (Ser65). Tyr68 carries the phosphotyrosine modification. Thr73 is subject to Phosphothreonine. 3 positions are modified to phosphoserine: Ser177, Ser178, and Ser188. Spectrin repeat units follow at residues 190–283 and 284–387; these read SGWD…HLRQ and LQNI…LKEN. Residues 388–458 form a Spectrin 3a repeat; that stretch reads AAYFQFFEEA…NLVNKSKKIV (71 aa). The SH3 domain maps to 470 to 527; that stretch reads NKPIILRALCDYKQDQKIVHKGDECILKDNNERSKWYVTGPGGVDMLVPSVGLIIPPP. The Spectrin 3b repeat unit spans residues 528–557; that stretch reads NPLAVDLSCKIEQYYEAILALWNQLYINMK. Spectrin repeat units follow at residues 558–639, 666–781, and 782–895; these read SLVS…IQLP, VIET…SLCS, and VRAL…DLEK. Positions 1034–1956 form a coiled coil; the sequence is KSLEDLKLKN…LQKEIEKLRQ (923 aa). The central fibrous rod domain stretch occupies residues 1069 to 1957; sequence FLDQNLQKYQ…QKEIEKLRQR (889 aa). Ser1670, Ser1720, and Ser2036 each carry phosphoserine. Residues 1958-2882 form a globular 2 region; sequence PYGSHRETQT…YSFSSSSIGG (925 aa). The tract at residues 1972–2220 is 4.5 X 38 AA tandem repeats (Domain A); that stretch reads TVDSSKLVFD…LLLSVQKRSM (249 aa). Plectin repeat units lie at residues 2021–2057, 2058–2095, 2096–2133, 2134–2171, 2175–2209, 2210–2245, 2263–2300, 2301–2338, 2339–2376, 2377–2414, 2418–2452, 2468–2505, 2519–2556, 2622–2659, 2660–2697, 2736–2773, and 2774–2811; these read QPFL…PEST, VMLL…FDDR, QQIY…RETG, MRLL…RDLY, NDPR…PHTG, LLLL…PSTV, KDFL…PGTA, LELL…IEFK, EKLL…KGHG, IRLL…EELS, SDPS…EETG, SQKN…YDTF, TITG…RKFF, SDPL…SITG, QRLL…QDMA, QRFL…GRAA, and QRLQ…DITG. Ser2219, Ser2221, and Ser2237 each carry phosphoserine. The interval 2256 to 2458 is 4.5 X 38 AA tandem repeats (Domain B); the sequence is DEVGERIKDF…EETGLCLLPL (203 aa). Gln2492 is lipidated: Omega-hydroxyceramide glutamate ester. The 4.5 X 38 AA tandem repeats (Domain C) stretch occupies residues 2621–2833; sequence LSDPLEESSP…GLPSPYNMSA (213 aa). A phosphoserine mark is found at Ser2822 and Ser2827. A disordered region spans residues 2822–2883; it reads SKGLPSPYNM…SFSSSSIGGY (62 aa). Tyr2829 bears the Phosphotyrosine mark. A phosphoserine mark is found at Ser2832 and Ser2836. A 6 X 4 AA tandem repeats of G-S-R-[SR] region spans residues 2835–2858; the sequence is GSRSGSRSGSRSGSRSGSRSGSRR. Over residues 2835–2858 the composition is skewed to low complexity; sequence GSRSGSRSGSRSGSRSGSRSGSRR. Arg2837 and Arg2858 each carry omega-N-methylarginine. Ser2860 carries the post-translational modification Phosphoserine. A Phosphothreonine modification is found at Thr2864. Residues 2867–2883 are compositionally biased toward low complexity; that stretch reads SSYSYSYSFSSSSIGGY. Ser2879 carries the phosphoserine modification.

It belongs to the plakin or cytolinker family. As to quaternary structure, homodimer. Interacts with COL17A1 (via cytoplasmic region). Interacts with DSC2. Interacts with PKP1. Interacts with PKP2. Interacts weakly with TMEM65. In terms of processing, phosphorylation at Ser-2860 increases association with intermediate filament cytokeratin, potentially facilitating interaction between desmosome junctions and intermediate filament architecture. As to expression, expressed in undifferentiated keratinocytes of the epidermis at birth, expression increases as differentiation proceeds (at protein level). Abundantly expressed in the suprabasal layers and weakly in the basal layers of the outer hair root sheath (at protein level). Expressed at intercalated disks in cardiomyocytes (at protein level).

The protein resides in the cell junction. The protein localises to the desmosome. It is found in the cell membrane. It localises to the cytoplasm. Major high molecular weight protein of desmosomes. Regulates profibrotic gene expression in cardiomyocytes via activation of the MAPK14/p38 MAPK signaling cascade and increase in TGFB1 protein abundance. The protein is Desmoplakin of Mus musculus (Mouse).